A 206-amino-acid polypeptide reads, in one-letter code: Thiamine-phosphate synthase (206 aa).

4-amino-2-methyl-5-(diphosphooxymethyl)pyrimidine is bound by residues 38 to 42 and N70; that span reads QLRAK. Residues D71 and D90 each contribute to the Mg(2+) site. S107 contacts 4-amino-2-methyl-5-(diphosphooxymethyl)pyrimidine. Residue 133-135 participates in 2-[(2R,5Z)-2-carboxy-4-methylthiazol-5(2H)-ylidene]ethyl phosphate binding; that stretch reads TTT. Position 136 (K136) interacts with 4-amino-2-methyl-5-(diphosphooxymethyl)pyrimidine. Residues G164 and 184-185 contribute to the 2-[(2R,5Z)-2-carboxy-4-methylthiazol-5(2H)-ylidene]ethyl phosphate site; that span reads VS.

This sequence belongs to the thiamine-phosphate synthase family. Mg(2+) is required as a cofactor.

The enzyme catalyses 2-[(2R,5Z)-2-carboxy-4-methylthiazol-5(2H)-ylidene]ethyl phosphate + 4-amino-2-methyl-5-(diphosphooxymethyl)pyrimidine + 2 H(+) = thiamine phosphate + CO2 + diphosphate. The catalysed reaction is 2-(2-carboxy-4-methylthiazol-5-yl)ethyl phosphate + 4-amino-2-methyl-5-(diphosphooxymethyl)pyrimidine + 2 H(+) = thiamine phosphate + CO2 + diphosphate. It catalyses the reaction 4-methyl-5-(2-phosphooxyethyl)-thiazole + 4-amino-2-methyl-5-(diphosphooxymethyl)pyrimidine + H(+) = thiamine phosphate + diphosphate. The protein operates within cofactor biosynthesis; thiamine diphosphate biosynthesis; thiamine phosphate from 4-amino-2-methyl-5-diphosphomethylpyrimidine and 4-methyl-5-(2-phosphoethyl)-thiazole: step 1/1. Condenses 4-methyl-5-(beta-hydroxyethyl)thiazole monophosphate (THZ-P) and 2-methyl-4-amino-5-hydroxymethyl pyrimidine pyrophosphate (HMP-PP) to form thiamine monophosphate (TMP). This Herpetosiphon aurantiacus (strain ATCC 23779 / DSM 785 / 114-95) protein is Thiamine-phosphate synthase.